Reading from the N-terminus, the 513-residue chain is Sulfhydryl oxidase 1 (513 aa).

An N-terminal signal peptide occupies residues Met1–Ala30. Residues Arg31 to Lys174 form the Thioredoxin domain. N-linked (GlcNAc...) asparagine glycosylation occurs at Asn51. Active-site nucleophile residues include Cys76 and Cys79. Cysteines 76 and 79 form a disulfide. Asn193 and Asn266 each carry an N-linked (GlcNAc...) asparagine glycan. Cys301 and Cys313 are joined by a disulfide. An ERV/ALR sulfhydryl oxidase domain is found at Ser304–Trp406. Residues Arg309, Trp316, His320, Glu350, His354, Trp377–Asn384, Lys403, and Trp406 each bind FAD. Cysteines 348 and 351 form a disulfide. Cysteines 412 and 415 form a disulfide.

It depends on FAD as a cofactor.

It is found in the secreted. The enzyme catalyses 2 R'C(R)SH + O2 = R'C(R)S-S(R)CR' + H2O2. In terms of biological role, catalyzes the oxidation of sulfhydryl groups in peptide and protein thiols to disulfides with the reduction of oxygen to hydrogen peroxide. May contribute to disulfide bond formation in a variety of secreted proteins. In Oryza sativa subsp. japonica (Rice), this protein is Sulfhydryl oxidase 1 (QSOX1).